The following is a 291-amino-acid chain: MPELPEVETVRRGLEPVITGAKIISITLNRRDLRFPFPEAFSERLVGRTIMELGRRGKYLLFHLSQNETILSHLGMSGSWRIEDDLLRKTYSAAGKFVKHDHFLMDIQAKDGKVYHLTYNDVRRFGFMLLLDTNRIYEHPLLKKLGLEPLSNEFSGRYLQEAFVNKKISLKGVLLDQSIIAGLGNIYVCEALWRSRLSPQRGAFTLALKTVCAREFADSLAQNIRNVIAEAISFGGSTLRDYIRTDGSLGYFQHSFSVYGREGKECFQCGIPITRISQSGRSSFYCSQCQK.

Catalysis depends on P2, which acts as the Schiff-base intermediate with DNA. E3 acts as the Proton donor in catalysis. The active-site Proton donor; for beta-elimination activity is K58. Residues H100, R123, and K166 each contribute to the DNA site. The FPG-type zinc-finger motif lies at S257–K291. The Proton donor; for delta-elimination activity role is filled by R281.

It belongs to the FPG family. As to quaternary structure, monomer. Zn(2+) serves as cofactor.

It catalyses the reaction Hydrolysis of DNA containing ring-opened 7-methylguanine residues, releasing 2,6-diamino-4-hydroxy-5-(N-methyl)formamidopyrimidine.. The enzyme catalyses 2'-deoxyribonucleotide-(2'-deoxyribose 5'-phosphate)-2'-deoxyribonucleotide-DNA = a 3'-end 2'-deoxyribonucleotide-(2,3-dehydro-2,3-deoxyribose 5'-phosphate)-DNA + a 5'-end 5'-phospho-2'-deoxyribonucleoside-DNA + H(+). Involved in base excision repair of DNA damaged by oxidation or by mutagenic agents. Acts as a DNA glycosylase that recognizes and removes damaged bases. Has a preference for oxidized purines, such as 7,8-dihydro-8-oxoguanine (8-oxoG). Has AP (apurinic/apyrimidinic) lyase activity and introduces nicks in the DNA strand. Cleaves the DNA backbone by beta-delta elimination to generate a single-strand break at the site of the removed base with both 3'- and 5'-phosphates. In Bartonella quintana (strain Toulouse) (Rochalimaea quintana), this protein is Formamidopyrimidine-DNA glycosylase.